Consider the following 230-residue polypeptide: Esterase OVCA2 (230 aa).

Residues serine 124, aspartate 182, and histidine 209 each act as charge relay system in the active site.

The protein belongs to the LovG family.

It catalyses the reaction a carboxylic ester + H2O = an alcohol + a carboxylate + H(+). Functionally, exhibits ester hydrolase activity with a strong preference for long-chain alkyl ester substrates and high selectivity against a variety of short, branched, and substituted esters. Is able to hydrolyze ester bonds within a wide range of p-nitrophenyl derivatives (C2-C14) in vitro, with a strong preference toward substrates of &gt;8 carbons. The polypeptide is Esterase OVCA2 (ovca2) (Xenopus tropicalis (Western clawed frog)).